Consider the following 282-residue polypeptide: Bis(5'-nucleosyl)-tetraphosphatase, symmetrical (282 aa).

Belongs to the Ap4A hydrolase family. As to quaternary structure, monomer.

It carries out the reaction P(1),P(4)-bis(5'-adenosyl) tetraphosphate + H2O = 2 ADP + 2 H(+). Functionally, hydrolyzes diadenosine 5',5'''-P1,P4-tetraphosphate to yield ADP. The polypeptide is Bis(5'-nucleosyl)-tetraphosphatase, symmetrical (Escherichia coli O157:H7).